A 505-amino-acid polypeptide reads, in one-letter code: Cytochrome P450 4Z1 (505 aa).

Residues 1-9 (MEPSWLQEL) lie on the Cytoplasmic side of the membrane. The chain crosses the membrane as a helical; Signal-anchor for type II membrane protein span at residues 10–30 (MAHPFLLLILLCMSLLLFQVI). The Lumenal segment spans residues 31-505 (RLYQRRRWMI…GIHVFAKKVC (475 aa)). Cys452 is a binding site for heme.

It belongs to the cytochrome P450 family. It depends on heme as a cofactor. As to expression, preferentially detected in breast carcinoma tissue and mammary gland, whereas only marginal expression is found in all other tested tissues.

The protein resides in the endoplasmic reticulum membrane. It localises to the microsome membrane. The enzyme catalyses an organic molecule + reduced [NADPH--hemoprotein reductase] + O2 = an alcohol + oxidized [NADPH--hemoprotein reductase] + H2O + H(+). It catalyses the reaction dodecanoate + reduced [NADPH--hemoprotein reductase] + O2 = 7-hydroxydodecanoate + oxidized [NADPH--hemoprotein reductase] + H2O + H(+). It carries out the reaction dodecanoate + reduced [NADPH--hemoprotein reductase] + O2 = 8-hydroxydodecanoate + oxidized [NADPH--hemoprotein reductase] + H2O + H(+). The catalysed reaction is dodecanoate + reduced [NADPH--hemoprotein reductase] + O2 = 9-hydroxydodecanoate + oxidized [NADPH--hemoprotein reductase] + H2O + H(+). The enzyme catalyses dodecanoate + reduced [NADPH--hemoprotein reductase] + O2 = 10-hydroxydodecanoate + oxidized [NADPH--hemoprotein reductase] + H2O + H(+). It catalyses the reaction dodecanoate + reduced [NADPH--hemoprotein reductase] + O2 = 11-hydroxydodecanoate + oxidized [NADPH--hemoprotein reductase] + H2O + H(+). It carries out the reaction tetradecanoate + reduced [NADPH--hemoprotein reductase] + O2 = 9-hydroxytetradecanoate + oxidized [NADPH--hemoprotein reductase] + H2O + H(+). The catalysed reaction is tetradecanoate + reduced [NADPH--hemoprotein reductase] + O2 = 10-hydroxytetradecanoate + oxidized [NADPH--hemoprotein reductase] + H2O + H(+). The enzyme catalyses tetradecanoate + reduced [NADPH--hemoprotein reductase] + O2 = 11-hydroxytetradecanoate + oxidized [NADPH--hemoprotein reductase] + H2O + H(+). It catalyses the reaction tetradecanoate + reduced [NADPH--hemoprotein reductase] + O2 = 12-hydroxytetradecanoate + oxidized [NADPH--hemoprotein reductase] + H2O + H(+). It carries out the reaction (5Z,8Z,11Z,14Z)-eicosatetraenoate + reduced [NADPH--hemoprotein reductase] + O2 = (14S,15R)-epoxy-(5Z,8Z,11Z)-eicosatrienoate + oxidized [NADPH--hemoprotein reductase] + H2O + H(+). Its function is as follows. A cytochrome P450 monooxygenase that catalyzes the in-chain oxidation of fatty acids. Catalyzes the hydroxylation of carbon-hydrogen bonds. Hydroxylates lauric and myristic acids predominantly at the omega-4 and omega-2 positions, respectively. Catalyzes the epoxidation of double bonds of polyunsaturated fatty acids (PUFA). Displays an absolute stereoselectivity in the epoxidation of arachidonic acid producing the 14(S),15(R)-epoxyeicosatrienoic acid (EET) enantiomer. Mechanistically, uses molecular oxygen inserting one oxygen atom into a substrate, and reducing the second into a water molecule, with two electrons provided by NADPH via cytochrome P450 reductase (CPR; NADPH-ferrihemoprotein reductase). The protein is Cytochrome P450 4Z1 of Homo sapiens (Human).